A 271-amino-acid chain; its full sequence is Urease accessory protein UreD (271 aa).

This sequence belongs to the UreD family. UreD, UreF and UreG form a complex that acts as a GTP-hydrolysis-dependent molecular chaperone, activating the urease apoprotein by helping to assemble the nickel containing metallocenter of UreC. The UreE protein probably delivers the nickel.

Its subcellular location is the cytoplasm. In terms of biological role, required for maturation of urease via the functional incorporation of the urease nickel metallocenter. This chain is Urease accessory protein UreD, found in Mycolicibacterium smegmatis (strain ATCC 700084 / mc(2)155) (Mycobacterium smegmatis).